Here is a 357-residue protein sequence, read N- to C-terminus: S-adenosylmethionine:tRNA ribosyltransferase-isomerase (357 aa).

It belongs to the QueA family. Monomer.

The protein resides in the cytoplasm. It catalyses the reaction 7-aminomethyl-7-carbaguanosine(34) in tRNA + S-adenosyl-L-methionine = epoxyqueuosine(34) in tRNA + adenine + L-methionine + 2 H(+). It participates in tRNA modification; tRNA-queuosine biosynthesis. Its function is as follows. Transfers and isomerizes the ribose moiety from AdoMet to the 7-aminomethyl group of 7-deazaguanine (preQ1-tRNA) to give epoxyqueuosine (oQ-tRNA). The protein is S-adenosylmethionine:tRNA ribosyltransferase-isomerase of Phenylobacterium zucineum (strain HLK1).